The chain runs to 123 residues: Large ribosomal subunit protein uL24 (123 aa).

It belongs to the universal ribosomal protein uL24 family. Part of the 50S ribosomal subunit.

Its function is as follows. One of two assembly initiator proteins, it binds directly to the 5'-end of the 23S rRNA, where it nucleates assembly of the 50S subunit. Functionally, located at the polypeptide exit tunnel on the outside of the subunit. The sequence is that of Large ribosomal subunit protein uL24 from Pyrobaculum islandicum (strain DSM 4184 / JCM 9189 / GEO3).